We begin with the raw amino-acid sequence, 219 residues long: Peroxiredoxin (219 aa).

One can recognise a Thioredoxin domain in the interval Pro2 to Lys164. Catalysis depends on Cys44, which acts as the Cysteine sulfenic acid (-SOH) intermediate. A substrate-binding site is contributed by Arg127. Cys206 and Cys212 are oxidised to a cystine.

It belongs to the peroxiredoxin family. Prx6 subfamily. In terms of assembly, homodecamer. Pentamer of dimers that assemble into a ring structure.

Its subcellular location is the cytoplasm. The catalysed reaction is a hydroperoxide + [thioredoxin]-dithiol = an alcohol + [thioredoxin]-disulfide + H2O. Functionally, thiol-specific peroxidase that catalyzes the reduction of hydrogen peroxide and organic hydroperoxides to water and alcohols, respectively. Plays a role in cell protection against oxidative stress by detoxifying peroxides. The chain is Peroxiredoxin from Methanosarcina mazei (strain ATCC BAA-159 / DSM 3647 / Goe1 / Go1 / JCM 11833 / OCM 88) (Methanosarcina frisia).